The chain runs to 75 residues: Protein TM_1420 (75 aa).

Residues Cys6, Cys11, Cys39, and Cys43 each coordinate [2Fe-2S] cluster.

It depends on [2Fe-2S] cluster as a cofactor.

Might be part of a multi-protein complex, possibly involved in metal cluster assembly. This is Protein TM_1420 from Thermotoga maritima (strain ATCC 43589 / DSM 3109 / JCM 10099 / NBRC 100826 / MSB8).